Here is a 31-residue protein sequence, read N- to C-terminus: Cytochrome b6-f complex subunit 6 (31 aa).

The chain crosses the membrane as a helical span at residues 4–26 (LTSYFGFLLAASTITPALFIGLN).

The protein belongs to the PetL family. In terms of assembly, the 4 large subunits of the cytochrome b6-f complex are cytochrome b6, subunit IV (17 kDa polypeptide, PetD), cytochrome f and the Rieske protein, while the 4 small subunits are PetG, PetL, PetM and PetN. The complex functions as a dimer.

It localises to the plastid. It is found in the chloroplast thylakoid membrane. Functionally, component of the cytochrome b6-f complex, which mediates electron transfer between photosystem II (PSII) and photosystem I (PSI), cyclic electron flow around PSI, and state transitions. PetL is important for photoautotrophic growth as well as for electron transfer efficiency and stability of the cytochrome b6-f complex. In Phalaenopsis aphrodite subsp. formosana (Moth orchid), this protein is Cytochrome b6-f complex subunit 6.